A 531-amino-acid polypeptide reads, in one-letter code: Jacalin-related lectin 16 (531 aa).

4 consecutive Jacalin-type lectin domains span residues 1–87 (MDRS…YFTW), 90–232 (PTKM…YFTT), 235–378 (LISL…YFRP), and 385–528 (TEKV…NVLP).

It belongs to the jacalin lectin family.

The polypeptide is Jacalin-related lectin 16 (JAL16) (Arabidopsis thaliana (Mouse-ear cress)).